The following is a 343-amino-acid chain: Cell division protein ZipA (343 aa).

The Periplasmic segment spans residues 1–4 (MDLN). The chain crosses the membrane as a helical span at residues 5–25 (TILIILGILALIGLVAHGIWS). Topologically, residues 26-343 (NRREKSQYFD…MAEAAYLARV (318 aa)) are cytoplasmic. The interval 39–98 (AFHRNPQSTGRPSAQASQPMTPNFAQPAKETEQIRQTYQEPQVRQMSSSPEQQTRPTAQA) is disordered. Composition is skewed to polar residues over residues 43 to 62 (NPQSTGRPSAQASQPMTPNF) and 72 to 95 (IRQTYQEPQVRQMSSSPEQQTRPT).

Belongs to the ZipA family. Interacts with FtsZ via their C-terminal domains.

The protein localises to the cell inner membrane. Its function is as follows. Essential cell division protein that stabilizes the FtsZ protofilaments by cross-linking them and that serves as a cytoplasmic membrane anchor for the Z ring. Also required for the recruitment to the septal ring of downstream cell division proteins. The chain is Cell division protein ZipA from Actinobacillus succinogenes (strain ATCC 55618 / DSM 22257 / CCUG 43843 / 130Z).